A 123-amino-acid polypeptide reads, in one-letter code: UPF0231 protein plu3616 (123 aa).

This sequence belongs to the UPF0231 family.

This Photorhabdus laumondii subsp. laumondii (strain DSM 15139 / CIP 105565 / TT01) (Photorhabdus luminescens subsp. laumondii) protein is UPF0231 protein plu3616.